Consider the following 833-residue polypeptide: Leucine--tRNA ligase (833 aa).

Residues 41–52 (PYPSGAGLHVGH) carry the 'HIGH' region motif. The 'KMSKS' region motif lies at 610-614 (KMSKS). Lysine 613 contacts ATP.

This sequence belongs to the class-I aminoacyl-tRNA synthetase family.

It localises to the cytoplasm. It carries out the reaction tRNA(Leu) + L-leucine + ATP = L-leucyl-tRNA(Leu) + AMP + diphosphate. In Streptococcus pyogenes serotype M1, this protein is Leucine--tRNA ligase.